Reading from the N-terminus, the 61-residue chain is Conotoxin Tx-D021 (61 aa).

Residues 1–22 (MRCLPVFVILLLLIASTPSVDA) form the signal peptide. Positions 23 to 48 (RAKTRDDMSLASFHDDAKRILQILQD) are excised as a propeptide. Cysteine 60 is subject to Cysteine amide.

It belongs to the conotoxin T superfamily. In terms of processing, contains 2 disulfide bonds that can be either 'C1-C3, C2-C4' or 'C1-C4, C2-C3', since these disulfide connectivities have been observed for conotoxins with cysteine framework V (for examples, see AC P0DQQ7 and AC P81755). In terms of tissue distribution, expressed by the venom duct.

The protein resides in the secreted. The sequence is that of Conotoxin Tx-D021 from Conus textile (Cloth-of-gold cone).